We begin with the raw amino-acid sequence, 441 residues long: MNKYQAVIIGFGKAGKTLAVTLAKAGWRVALIEQSNAMYGGTCINIGCIPTKTLVHDAQQHTDFVRAIQRKNEVVNFLRNKNFHNLADMPNIDVIDGQAEFINNHSLRVHRPEGNLEIHGEKIFINTGAQTVVPPIPGITTTPGVYDSTGLLNLKELPGHLGILGGGYIGVEFASMFANFGSKVTILEAASLFLPREDRDIADNIATILRDQGVDIILNAHVERISHHENQVQVHSEHAQLAVDALLIASGRQPATASLHPENAGIAVNERGAIVVDKRLHTTADNIWAMGDVTGGLQFTYISLDDYRIVRDELLGEGKRSTDDRKNVPYSVFMTPPLSRVGMTEEQARESGADIQVVTLPVAAIPRARVMNDTRGVLKAIVDNKTQRMLGASLLCVDSHEMINIVKMVMDAGLPYSILRDQIFTHPSMSESLNDLFSLVK.

33–43 provides a ligand contact to FAD; it reads EQSNAMYGGTC. A disulfide bridge links cysteine 43 with cysteine 48. The Proton acceptor role is filled by histidine 426.

Belongs to the class-I pyridine nucleotide-disulfide oxidoreductase family. Requires FAD as cofactor.

Probably involved in reactive chlorine species (RCS) stress resistance. This Escherichia coli (strain K12) protein is Probable pyridine nucleotide-disulfide oxidoreductase RclA (rclA).